The following is a 242-amino-acid chain: tRNA (guanine-N(1)-)-methyltransferase (242 aa).

S-adenosyl-L-methionine contacts are provided by residues Gly-114 and 134–139 (IGDFVL). Residues 223-233 (RRDLLPEHSKN) are compositionally biased toward basic and acidic residues. Residues 223–242 (RRDLLPEHSKNNPEQTNKLS) are disordered.

It belongs to the RNA methyltransferase TrmD family. As to quaternary structure, homodimer.

Its subcellular location is the cytoplasm. The catalysed reaction is guanosine(37) in tRNA + S-adenosyl-L-methionine = N(1)-methylguanosine(37) in tRNA + S-adenosyl-L-homocysteine + H(+). Its function is as follows. Specifically methylates guanosine-37 in various tRNAs. The protein is tRNA (guanine-N(1)-)-methyltransferase of Rhodopirellula baltica (strain DSM 10527 / NCIMB 13988 / SH1).